The sequence spans 212 residues: Proheparin-binding EGF-like growth factor (212 aa).

Positions 1–18 (MDGRVVLIHALLTAVCSA) are cleaved as a signal peptide. Over 19 to 167 (AVGKFGRDGP…PSTYDHTTAL (149 aa)) the chain is Extracellular. The interval 82 to 108 (SKPQGPVTPKKKGNGNKRRKGKGLGKK) is disordered. The span at 90-106 (PKKKGNGNKRRKGKGLG) shows a compositional bias: basic residues. The EGF-like domain occupies 108–148 (KRDPCLRKYKDFCIHGECKYIRELGAPSCICQPGYHGERCH). 3 disulfide bridges follow: cysteine 112–cysteine 125, cysteine 120–cysteine 136, and cysteine 138–cysteine 147. Positions 153–212 (PVEHPPSTYDHTTALAVVAVVLSSLCLVIITALLMFRCHKRGVYDVENEEKIKLGITVNH) are cleaved as a propeptide — C-terminal. The chain crosses the membrane as a helical span at residues 168-188 (AVVAVVLSSLCLVIITALLMF). Residues 189–212 (RCHKRGVYDVENEEKIKLGITVNH) lie on the Cytoplasmic side of the membrane.

As to quaternary structure, interacts with CNIH2.

Its subcellular location is the secreted. The protein resides in the extracellular space. It is found in the cell membrane. Functionally, may be involved in macrophage-mediated cellular proliferation. It is mitogenic for fibroblasts and smooth muscle but not endothelial cells. It is able to bind EGF receptor/EGFR with higher affinity than EGF itself and is a far more potent mitogen for smooth muscle cells than EGF. Plays an important role in the proper development of cranial nerves by inhibiting the migration of the cranial neural crest cells (NCCs) into the odd-numbered neuromeres (r3 and r5) of the hindbrain Plays a role in mediating v-Jun-induced oncogenic transformation. This Gallus gallus (Chicken) protein is Proheparin-binding EGF-like growth factor (HBEGF).